Here is a 225-residue protein sequence, read N- to C-terminus: Ribonuclease 3 (225 aa).

Positions 5-127 constitute an RNase III domain; that stretch reads IEKLTRQLGY…IIGAVYLDSD (123 aa). Mg(2+) is bound at residue glutamate 40. Residue aspartate 44 is part of the active site. The Mg(2+) site is built by aspartate 113 and glutamate 116. Residue glutamate 116 is part of the active site. Residues 154 to 224 form the DRBM domain; sequence DPKTRLQEFL…AELALEQLTN (71 aa).

The protein belongs to the ribonuclease III family. In terms of assembly, homodimer. The cofactor is Mg(2+).

The protein resides in the cytoplasm. It catalyses the reaction Endonucleolytic cleavage to 5'-phosphomonoester.. Digests double-stranded RNA. Involved in the processing of primary rRNA transcript to yield the immediate precursors to the large and small rRNAs (23S and 16S). Processes some mRNAs, and tRNAs when they are encoded in the rRNA operon. Processes pre-crRNA and tracrRNA of type II CRISPR loci if present in the organism. The sequence is that of Ribonuclease 3 from Vibrio vulnificus (strain CMCP6).